Reading from the N-terminus, the 224-residue chain is MSLKNLPSESMPREKLLQRGPQSLSDAELLAIFLRTGTQGMNVIELADFLLRDFGSLRKLFSADEQSFCRHKGLGQAKYVQLQAVLEMTQRYLAETLQRGDALTSPQHTKLYLSSMLRDRHREAFYVLFLDNQNRVIKDEVMFEGTIDAASVYPREVVKRALHYNAAALILAHNHPSGVAEPSQADRRITRRLSDALGLVDIRVLDHFVVGDGEVVSFAERGWI.

Residues 1-20 form a disordered region; it reads MSLKNLPSESMPREKLLQRG. Positions 102 to 224 constitute an MPN domain; that stretch reads ALTSPQHTKL…VVSFAERGWI (123 aa). Zn(2+) contacts are provided by histidine 173, histidine 175, and aspartate 186. The JAMM motif motif lies at 173 to 186; the sequence is HNHPSGVAEPSQAD.

This sequence belongs to the UPF0758 family.

This Vibrio vulnificus (strain CMCP6) protein is UPF0758 protein VV1_0825.